A 395-amino-acid chain; its full sequence is MSLDLRARVREELERLKREGLYISPKVLEAPQEPVTRVEGREVVNLASNNYLGFANHPYLKEKARQYLEKWGAGSGAVRTIAGTFTYHVELEEALARFKGTESALVLQSGFTANQGVLGALLKEGDVVFSDELNHASIIDGLRLTKATRLVFRHADVAHLEELLKAHDTDGLKLIVTDGVFSMDGDIAPLDKIVPLAKKYKAVVYVDDAHGSGVLGEKGKGTVHHFGFHQDPDVVQVATLSKAWAGIGGYAAGARELKDLLINKARPFLFSTSHPPAVVGALLGALELIEKEPERVERLWENTRYFKRELARLGYDTLGSQTPITPVLFGEAPLAFEASRLLLEEGVFAVGIGFPTVPRGKARIRNIVTAAHTKEMLDKALEAYEKVGKRLGIIR.

110-111 (GF) lines the pyridoxal 5'-phosphate pocket. Position 135 (His135) interacts with substrate. Pyridoxal 5'-phosphate-binding positions include Ser182, 207–210 (DDAH), and 239–242 (TLSK). N6-(pyridoxal phosphate)lysine is present on Lys242. Residue Thr356 participates in substrate binding.

This sequence belongs to the class-II pyridoxal-phosphate-dependent aminotransferase family. Homodimer. Pyridoxal 5'-phosphate is required as a cofactor.

It catalyses the reaction 6-carboxyhexanoyl-[ACP] + L-alanine + H(+) = (8S)-8-amino-7-oxononanoate + holo-[ACP] + CO2. It carries out the reaction glycine + acetyl-CoA = (2S)-2-amino-3-oxobutanoate + CoA. It functions in the pathway cofactor biosynthesis; biotin biosynthesis. Functionally, catalyzes the decarboxylative condensation of pimeloyl-[acyl-carrier protein] and L-alanine to produce 8-amino-7-oxononanoate (AON), [acyl-carrier protein], and carbon dioxide. Can also use pimeloyl-CoA instead of pimeloyl-ACP as substrate. It also converts 2-amino-3-ketobutyrate and CoA to glycine and acetyl-CoA. Activity is also observed with the following combinations of substrates: acetyl-CoA and either L-alanine or L-serine, pimeloyl-CoA and either glycine or L-serine, and palmitoyl-CoA with L-alanine. The polypeptide is 8-amino-7-oxononanoate synthase/2-amino-3-ketobutyrate coenzyme A ligase (Thermus thermophilus (strain ATCC 27634 / DSM 579 / HB8)).